The sequence spans 483 residues: MAWQLTVPELQDQLQCPICLEVFKEPLMLQCGHSYCKNCLDSLSEHLDSELRCPVCRQSVDCSSSPPNVSLARVIDALRLPGDTEPTVCVHHRNPLSLFCEKDQEFICGLCGLLGSHQHHRVTPVSTVYSRMKEELAGRLSELKEQHRDVEEHIGKLVNNRTRIINESDVFSWVIRREFQELHHLVDEEKARCLEGVESHTRGLVASLDMQLEQAQGTQERLAQAERVLEQFGNESHHEFIRFHSITSRGEVQQARPLEGVFSPISFKPALHQADIKLTVWKRLFRKVLPAPESLKLDPATAHPLLELSKGNTVVHCGLLAQRRASQPERFDYSTCVLASKGFSWGRHYWEVVVGSKSDWRLGVIKGTASRKGKLSKSPEHGVWLIGLKEGRLYEAFGCPRLPLPVAGHPHRIGVYLHYEQGELTFFDADRPDDLRALYTFQADFQGKLYPILDTCWHERGSNSLPMVLPPPSAPGHLTRAQV.

The RING-type zinc finger occupies 16 to 57 (CPICLEVFKEPLMLQCGHSYCKNCLDSLSEHLDSELRCPVCR). Residues 84–125 (TEPTVCVHHRNPLSLFCEKDQEFICGLCGLLGSHQHHRVTPV) form a B box-type zinc finger. Cys89, His92, Cys111, and His117 together coordinate Zn(2+). Coiled-coil stretches lie at residues 127 to 169 (TVYS…NESD) and 203 to 236 (GLVA…GNES). The B30.2/SPRY domain maps to 275–474 (DIKLTVWKRL…LPMVLPPPSA (200 aa)). Position 372 is an N6-acetyllysine (Lys372).

The protein belongs to the TRIM/RBCC family. In terms of assembly, can form dimers and trimers. Interacts with several E2 ubiquitin-conjugating enzymes, including UBE2L6, UBE2E1, UBE2E3. No interaction with UBE2H. Interacts with BECN1. Interacts with SQSTM1. Interacts with NLRP3. Post-translationally, auto-ubiquitinated. Acetylated by EP300 and KAT2B. HDAC6 drives TRIM50 deacetylation. Acetylation antagonizes with TRIM50 ubiquitination.

The protein resides in the cytoplasm. The enzyme catalyses S-ubiquitinyl-[E2 ubiquitin-conjugating enzyme]-L-cysteine + [acceptor protein]-L-lysine = [E2 ubiquitin-conjugating enzyme]-L-cysteine + N(6)-ubiquitinyl-[acceptor protein]-L-lysine.. In terms of biological role, E3 ubiquitin-protein ligase that ubiquitinates Beclin-1/BECN1 in a 'Lys-63'-dependent manner enhancing its binding to ULK1. In turn, promotes starvation-induced autophagy activation. Also interacts with p62/SQSTM1 protein and thereby induces the formation and the autophagy clearance of aggresome-associated polyubiquitinated proteins through HDAC6 interaction. Also promotes NLRP3 inflammasome activation by directly inducing NLRP3 oligomerization independent of its E3 ligase function. The protein is E3 ubiquitin-protein ligase TRIM50 (Trim50) of Rattus norvegicus (Rat).